The following is a 325-amino-acid chain: D-alanine--D-alanine ligase (325 aa).

The region spanning 102–300 (KQIFRAAGIP…FTELVERMLQ (199 aa)) is the ATP-grasp domain. 130 to 185 (AAELGSPLVIKPSNNGSTVGISIVRDERSFAQGLELARSVSSRIFLERYVPGKEIT) contacts ATP. The Mg(2+) site is built by Asp254, Glu267, and Asn269.

It belongs to the D-alanine--D-alanine ligase family. Mg(2+) serves as cofactor. Requires Mn(2+) as cofactor.

The protein resides in the cytoplasm. It carries out the reaction 2 D-alanine + ATP = D-alanyl-D-alanine + ADP + phosphate + H(+). It participates in cell wall biogenesis; peptidoglycan biosynthesis. Functionally, cell wall formation. This is D-alanine--D-alanine ligase from Synechococcus sp. (strain JA-2-3B'a(2-13)) (Cyanobacteria bacterium Yellowstone B-Prime).